Consider the following 294-residue polypeptide: MINGSIVALITPMNSDGTVDYASLERLVEFHIEQGTDAIVAVGTTGESATLPMTEHAAVVCQTVKFASGRIPVIGGNGANATAEAIELTKSMQKSGVVAMLGVTPYYNKPTPKGLIAHYTAVAASTDIPQILYNVPGRTAVDMKPETVAELSSVSNIIGVKEATGDLSRVARLRELCGEDFLLYSGDDATAREFLLLGGNGVISVANNIVPHAFKAMCDAALAKNAQLAETIDQPLTGIYRSLFCEANPIPVKWAVHRMGLIANGHIRLPLTELSEQFHGLLIETMKQAHIEVK.

Residue Thr-45 participates in pyruvate binding. The active-site Proton donor/acceptor is Tyr-133. The active-site Schiff-base intermediate with substrate is Lys-161. Residue Ile-203 coordinates pyruvate.

It belongs to the DapA family. Homotetramer; dimer of dimers.

The protein localises to the cytoplasm. It carries out the reaction L-aspartate 4-semialdehyde + pyruvate = (2S,4S)-4-hydroxy-2,3,4,5-tetrahydrodipicolinate + H2O + H(+). Its pathway is amino-acid biosynthesis; L-lysine biosynthesis via DAP pathway; (S)-tetrahydrodipicolinate from L-aspartate: step 3/4. Its function is as follows. Catalyzes the condensation of (S)-aspartate-beta-semialdehyde [(S)-ASA] and pyruvate to 4-hydroxy-tetrahydrodipicolinate (HTPA). The protein is 4-hydroxy-tetrahydrodipicolinate synthase of Shewanella frigidimarina (strain NCIMB 400).